Here is a 313-residue protein sequence, read N- to C-terminus: Protein ABA AND ROS SENSITIVE 1 (313 aa).

A Nuclear localization signal 1 motif is present at residues 5–12 (AKKKAMFR). Residues 39 to 61 (CRVCNVVLKSESLWDVHQASRKH) form a C2H2-type zinc finger. Over residues 115 to 131 (ARAEVEPAKSKNLEQSK) the composition is skewed to basic and acidic residues. Disordered regions lie at residues 115-189 (ARAE…LPTG), 232-254 (MEEE…QRSY), and 271-313 (ARLA…AQHL). A compositionally biased stretch (polar residues) spans 155–176 (TDSSNTKTTSEPKQSQTQTTGP). Acidic residues predominate over residues 232–248 (MEEEEVDAAETIEEEEQ). Positions 232 to 271 (MEEEEVDAAETIEEEEQREQRSYKEKVEILKRKKMELKAA) form a coiled coil. Positions 274–281 (AKRSKTSE) match the Nuclear localization signal 2 motif. Residues 293–305 (ESPSDEEDDEDSA) are compositionally biased toward acidic residues.

In terms of tissue distribution, mostly expressed in siliques and, to a lower extent, in roots. Barely deteclable in leaves and stems.

Its subcellular location is the nucleus. It is found in the cytoplasm. Its function is as follows. Essential for breaking seed dormancy before seed germination. Prevents reactive oxygen species (ROS) accumulation in response to abscisic acid (ABA) and oxidative stress, probably by repressing the accumulation of ABA-induced ROS-scavenging enzymes (e.g. CSD3). In Arabidopsis thaliana (Mouse-ear cress), this protein is Protein ABA AND ROS SENSITIVE 1.